A 195-amino-acid polypeptide reads, in one-letter code: Imidazoleglycerol-phosphate dehydratase (195 aa).

Belongs to the imidazoleglycerol-phosphate dehydratase family.

The protein localises to the cytoplasm. It catalyses the reaction D-erythro-1-(imidazol-4-yl)glycerol 3-phosphate = 3-(imidazol-4-yl)-2-oxopropyl phosphate + H2O. It participates in amino-acid biosynthesis; L-histidine biosynthesis; L-histidine from 5-phospho-alpha-D-ribose 1-diphosphate: step 6/9. The protein is Imidazoleglycerol-phosphate dehydratase of Geobacillus thermodenitrificans (strain NG80-2).